Consider the following 580-residue polypeptide: Nuclear body protein SP140-like protein (580 aa).

Residues 33-149 (SLQRLFTEDQ…IYKSFKNAIQ (117 aa)) enclose the HSR domain. The interval 155 to 293 (QESDRKEREE…RSRASRKHKD (139 aa)) is disordered. Positions 156 to 170 (ESDRKEREERPDIKL) are enriched in basic and acidic residues. Lys169 participates in a covalent cross-link: Glycyl lysine isopeptide (Lys-Gly) (interchain with G-Cter in SUMO2). The residue at position 180 (Ser180) is a Phosphoserine. Over residues 207–219 (KPKRKRRKKKGHG) the composition is skewed to basic residues. The span at 224–236 (GTRTQKNNQQNDN) shows a compositional bias: polar residues. Residues 280–290 (QKRVRSRASRK) show a composition bias toward basic residues. A Glycyl lysine isopeptide (Lys-Gly) (interchain with G-Cter in SUMO2) cross-link involves residue Lys292. The 82-residue stretch at 293–374 (DETVDFQAPL…RRLMEEGSLP (82 aa)) folds into the SAND domain. Residues 403-449 (LDECEVCRDGGELFCCDTCSRVFHEDCHIPPVESEKTPWNCIFCRMK) form a PHD-type zinc finger. Residues 467–570 (QMCPEEQLKC…AEFEKDFKEV (104 aa)) form the Bromo domain.

This Homo sapiens (Human) protein is Nuclear body protein SP140-like protein (SP140L).